Consider the following 488-residue polypeptide: Cobyric acid synthase (488 aa).

Residues 250-438 enclose the GATase cobBQ-type domain; that stretch reads DITIAIIRLP…LHGIFDNGSW (189 aa). The active-site Nucleophile is the C331. H430 is an active-site residue.

The protein belongs to the CobB/CobQ family. CobQ subfamily.

It functions in the pathway cofactor biosynthesis; adenosylcobalamin biosynthesis. Catalyzes amidations at positions B, D, E, and G on adenosylcobyrinic A,C-diamide. NH(2) groups are provided by glutamine, and one molecule of ATP is hydrogenolyzed for each amidation. This chain is Cobyric acid synthase, found in Trichodesmium erythraeum (strain IMS101).